The primary structure comprises 389 residues: Succinyl-diaminopimelate desuccinylase (389 aa).

Position 75 (histidine 75) interacts with Zn(2+). Aspartate 77 is a catalytic residue. Aspartate 108 provides a ligand contact to Zn(2+). Residue glutamate 142 is the Proton acceptor of the active site. Positions 143, 171, and 357 each coordinate Zn(2+).

This sequence belongs to the peptidase M20A family. DapE subfamily. In terms of assembly, homodimer. Zn(2+) is required as a cofactor. It depends on Co(2+) as a cofactor.

It carries out the reaction N-succinyl-(2S,6S)-2,6-diaminopimelate + H2O = (2S,6S)-2,6-diaminopimelate + succinate. It participates in amino-acid biosynthesis; L-lysine biosynthesis via DAP pathway; LL-2,6-diaminopimelate from (S)-tetrahydrodipicolinate (succinylase route): step 3/3. Catalyzes the hydrolysis of N-succinyl-L,L-diaminopimelic acid (SDAP), forming succinate and LL-2,6-diaminopimelate (DAP), an intermediate involved in the bacterial biosynthesis of lysine and meso-diaminopimelic acid, an essential component of bacterial cell walls. The chain is Succinyl-diaminopimelate desuccinylase from Paracidovorax citrulli (strain AAC00-1) (Acidovorax citrulli).